We begin with the raw amino-acid sequence, 1902 residues long: Plexin-B3 (1902 aa).

A signal peptide spans 1 to 36; sequence MLTDFLQAPVMAPWSPFSLHLLLLFLPLLPLTRVHR. A Sema domain is found at 37-461; sequence FSVPNTSFNH…TAQQVDRILV (425 aa). Residues 37–1245 are Extracellular-facing; that stretch reads FSVPNTSFNH…MMSTFPVEAQ (1209 aa). An N-linked (GlcNAc...) asparagine glycan is attached at Asn41. 2 cysteine pairs are disulfide-bonded: Cys88-Cys97 and Cys122-Cys130. Residue Asn221 is glycosylated (N-linked (GlcNAc...) asparagine). 3 disulfide bridges follow: Cys257-Cys360, Cys273-Cys305, and Cys323-Cys347. A disordered region spans residues 353–372; the sequence is DSPESYPCGDEHTPSPIAGR. N-linked (GlcNAc...) asparagine glycans are attached at residues Asn416 and Asn469. One can recognise a PSI 1 domain in the interval 463 to 515; sequence ACPQFPNCTTCLQARDPLCGWCILQGRCTRRGECGRAAQPNHWLWSYEDNHCP. 5 disulfides stabilise this stretch: Cys464-Cys481, Cys470-Cys514, Cys473-Cys490, Cys484-Cys496, and Cys551-Cys569. PSI domains lie at 609–671 and 776–822; these read DCSA…EACP and DCAM…QLCP. Residues Asn791, Asn889, Asn910, Asn946, Asn1090, and Asn1207 are each glycosylated (N-linked (GlcNAc...) asparagine). 4 consecutive IPT/TIG domains span residues 823–914, 915–1001, 1003–1134, and 1154–1221; these read IPSI…FTYQ, DPVL…FRYT, NPQL…FLYQ, and KPGH…QMGN. A helical membrane pass occupies residues 1246–1266; that stretch reads LGLGMGAAVLIAAVLLLTLMY. Residues 1267-1902 are Cytoplasmic-facing; sequence RHKSKKALRD…ALVEYKVTDL (636 aa).

This sequence belongs to the plexin family. In terms of assembly, binds MET and MST1R. Interacts with RIT2/RIN. May form homodimers (via Sema domain). Interacts (via cytoplasmic domain) with FSCN1, ARHGDIA and RAC1. In terms of tissue distribution, expressed in brain (at protein level). In cerebellum, strongest expression detected in Purkinje and granular cells. Detected at very low levels in several fetal tissues, including dorsal root ganglia (DRG), heart, lung, optic bulb, brain and liver.

It is found in the cell membrane. Receptor for SEMA5A that plays a role in axon guidance, invasive growth and cell migration. Stimulates neurite outgrowth and mediates Ca(2+)/Mg(2+)-dependent cell aggregation. In glioma cells, SEMA5A stimulation of PLXNB3 results in the disassembly of F-actin stress fibers, disruption of focal adhesions and cellular collapse as well as inhibition of cell migration and invasion through ARHGDIA-mediated inactivation of RAC1. Seem to be non-essential for normal development and function of the central nervous system. This is Plexin-B3 (Plxnb3) from Mus musculus (Mouse).